The following is a 212-amino-acid chain: Protein irg-1 (212 aa).

Expressed in the intestine.

Plays a role in innate immunity by conferring resistance to virulent strains of the Gram-negative bacterium P.aeruginosa via the zip-2 pathway. Can act independently of several immunity-related pathways including pmk-1 p38MAPK, dbl-1 TGF-beta, kgb-1 JNK and bar-1/beta-catenin pathways. The protein is Protein irg-1 of Caenorhabditis elegans.